An 81-amino-acid polypeptide reads, in one-letter code: ATP synthase subunit c, chloroplastic (81 aa).

2 helical membrane passes run 3–23 and 53–73; these read PLIS…ASIG and LLLS…VALA.

The protein belongs to the ATPase C chain family. F-type ATPases have 2 components, F(1) - the catalytic core - and F(0) - the membrane proton channel. F(1) has five subunits: alpha(3), beta(3), gamma(1), delta(1), epsilon(1). F(0) has four main subunits: a(1), b(1), b'(1) and c(10-14). The alpha and beta chains form an alternating ring which encloses part of the gamma chain. F(1) is attached to F(0) by a central stalk formed by the gamma and epsilon chains, while a peripheral stalk is formed by the delta, b and b' chains.

It localises to the plastid. The protein localises to the chloroplast thylakoid membrane. Functionally, f(1)F(0) ATP synthase produces ATP from ADP in the presence of a proton or sodium gradient. F-type ATPases consist of two structural domains, F(1) containing the extramembraneous catalytic core and F(0) containing the membrane proton channel, linked together by a central stalk and a peripheral stalk. During catalysis, ATP synthesis in the catalytic domain of F(1) is coupled via a rotary mechanism of the central stalk subunits to proton translocation. Key component of the F(0) channel; it plays a direct role in translocation across the membrane. A homomeric c-ring of between 10-14 subunits forms the central stalk rotor element with the F(1) delta and epsilon subunits. In Huperzia lucidula (Shining clubmoss), this protein is ATP synthase subunit c, chloroplastic.